Here is a 549-residue protein sequence, read N- to C-terminus: GPI mannosyltransferase 3 (549 aa).

The Cytoplasmic portion of the chain corresponds to 1–39 (MAYNNSVRKRKKDIQDANGFHRDQTIDKKSRATNKLEES). The chain crosses the membrane as a helical span at residues 40–60 (LPTFKVFIVLFFIRLLNSLTI). The Lumenal segment spans residues 61-119 (KTFFQADEYYQCLEPAYNFVFGSGYITWEWEEGIRSSIHPLIYALGYKMVSYVHFDDKP). A helical membrane pass occupies residues 120 to 140 (IILIPKVIGALIASIGEVYLY). The Cytoplasmic segment spans residues 141–154 (KFSKKFTKNEKLAR). Residues 155–175 (LTLILSLLSPFNWYIITRSFS) form a helical membrane-spanning segment. The Lumenal portion of the chain corresponds to 176-205 (NSFEMVLTTIAFTYWPWDNVISYKDISMSC). A helical transmembrane segment spans residues 206–226 (IIAFISCIVRPTNGIIWLYLG). At 227–246 (INFMIKNYKLEKQSGKLMKL) the chain is on the cytoplasmic side. Residues 247 to 267 (ILILSIELILILLVNTGLDYI) form a helical membrane-spanning segment. Residues 268-289 (FYGKTTFPLYNFVEFNVIRNLS) lie on the Lumenal side of the membrane. N-linked (GlcNAc...) asparagine glycosylation is present at Asn287. The helical transmembrane segment at 290–310 (IFYGVAPWHFYLFQGVPIILM) threads the bilayer. At 311–328 (TYLPWLLHSAIVLKKYKS) the chain is on the cytoplasmic side. The chain crosses the membrane as a helical span at residues 329 to 349 (LLGQVAILMIGGFSLIDHKEI). Position 350 (Arg350) is a topological domain, lumenal. The chain crosses the membrane as a helical span at residues 351 to 367 (FIYPLQPIFMLMVAYSI). Over 368–379 (HETKHKFQRLYK) the chain is Cytoplasmic. Residues 380–400 (FLVPVIIILNLIIAIFFTQVH) form a helical membrane-spanning segment. Topologically, residues 401–549 (ERGVIDIVQY…KGDIIVYCQI (149 aa)) are lumenal. An N-linked (GlcNAc...) asparagine glycan is attached at Asn442.

Belongs to the glycosyltransferase 22 family. PIGB subfamily.

Its subcellular location is the endoplasmic reticulum membrane. It participates in glycolipid biosynthesis; glycosylphosphatidylinositol-anchor biosynthesis. Its function is as follows. Mannosyltransferase involved in glycosylphosphatidylinositol-anchor biosynthesis. Transfers the third mannose to Man2-GlcN-acyl-PI during GPI precursor assembly. The protein is GPI mannosyltransferase 3 (GPI10) of Debaryomyces hansenii (strain ATCC 36239 / CBS 767 / BCRC 21394 / JCM 1990 / NBRC 0083 / IGC 2968) (Yeast).